The following is a 212-amino-acid chain: Ribonuclease HII (212 aa).

Residues 28-212 (SLIAGIDEVG…KSFAPVRQVF (185 aa)) enclose the RNase H type-2 domain. A divalent metal cation contacts are provided by Asp34, Glu35, and Asp127.

Belongs to the RNase HII family. Requires Mn(2+) as cofactor. Mg(2+) is required as a cofactor.

It is found in the cytoplasm. It carries out the reaction Endonucleolytic cleavage to 5'-phosphomonoester.. In terms of biological role, endonuclease that specifically degrades the RNA of RNA-DNA hybrids. In Chlamydia abortus (strain DSM 27085 / S26/3) (Chlamydophila abortus), this protein is Ribonuclease HII.